The chain runs to 633 residues: ATP-dependent clpX-like chaperone, mitochondrial (633 aa).

Residues 1–56 (MSSCGACTCGAAAARLLTTSLTSAQRGISCGRIHVPVLGRLGTLDTQILRRAPLRT) constitute a mitochondrion transit peptide. The segment at 65–101 (ASKDGTNKDGSGDGNKKSVTEGSSKKSGSGNSGKGGN) is disordered. Basic and acidic residues predominate over residues 69-83 (GTNKDGSGDGNKKSV). Positions 84 to 93 (TEGSSKKSGS) are enriched in low complexity. Residues 93-146 (SGNSGKGGNQLRCPKCGDLCTHVETFVSSTRFVKCEKCHHFFVVLSEADSKKSI) form the ClpX-type ZB domain. Zn(2+) is bound by residues Cys105, Cys108, Cys127, and Cys130. An ATP-binding site is contributed by 294–301 (PTGSGKTL). An N6-acetyllysine modification is found at Lys437. Basic and acidic residues predominate over residues 598 to 610 (KEPGYIRAPSKES). The interval 598 to 633 (KEPGYIRAPSKESSEEDYDSGVEEDGWPRQADAANS) is disordered. A compositionally biased stretch (acidic residues) spans 611–622 (SEEDYDSGVEED). Position 617 is a phosphoserine (Ser617).

The protein belongs to the ClpX chaperone family. As to quaternary structure, homohexamer that forms a ring structure; this hexamerization requires ATP binding. Component of the ClpXP complex formed by the assembly of two CLPP heptameric rings with two CLPX hexameric rings, giving rise to a symmetrical structure with two central CLPP rings flanked by a CLPX ring at either end of the complex. Interacts with TFAM.

It localises to the mitochondrion. The protein resides in the mitochondrion matrix. The protein localises to the mitochondrion nucleoid. The catalysed reaction is ATP + H2O = ADP + phosphate + H(+). In terms of biological role, ATP-dependent chaperone that functions as an unfoldase. As part of the ClpXP protease complex, it recognizes specific protein substrates, unfolds them using energy derived from ATP hydrolysis, and then translocates them to the proteolytic subunit (CLPP) of the ClpXP complex for degradation. Thanks to its chaperone activity, it also functions in the incorporation of the pyridoxal phosphate cofactor into 5-aminolevulinate synthase, thereby activating 5-aminolevulinate (ALA) synthesis, the first step in heme biosynthesis. This chaperone is also involved in the control of mtDNA nucleoid distribution, by regulating mitochondrial transcription factor A (TFAM) activity. This chain is ATP-dependent clpX-like chaperone, mitochondrial, found in Rattus norvegicus (Rat).